The primary structure comprises 131 residues: Profilin-5 (131 aa).

A disulfide bond links Cys-13 and Cys-115. The short motif at 81–97 (AVIRGKKGAGGITIKKT) is the Involved in PIP2 interaction element. Thr-111 carries the post-translational modification Phosphothreonine.

This sequence belongs to the profilin family. In terms of assembly, occurs in many kinds of cells as a complex with monomeric actin in a 1:1 ratio. In terms of processing, phosphorylated by MAP kinases.

The protein localises to the cytoplasm. It localises to the cytoskeleton. In terms of biological role, binds to actin and affects the structure of the cytoskeleton. At high concentrations, profilin prevents the polymerization of actin, whereas it enhances it at low concentrations. This is Profilin-5 from Phleum pratense (Common timothy).